The sequence spans 447 residues: Probable glycine dehydrogenase (decarboxylating) subunit 1 (447 aa).

This sequence belongs to the GcvP family. N-terminal subunit subfamily. In terms of assembly, the glycine cleavage system is composed of four proteins: P, T, L and H. In this organism, the P 'protein' is a heterodimer of two subunits.

The catalysed reaction is N(6)-[(R)-lipoyl]-L-lysyl-[glycine-cleavage complex H protein] + glycine + H(+) = N(6)-[(R)-S(8)-aminomethyldihydrolipoyl]-L-lysyl-[glycine-cleavage complex H protein] + CO2. In terms of biological role, the glycine cleavage system catalyzes the degradation of glycine. The P protein binds the alpha-amino group of glycine through its pyridoxal phosphate cofactor; CO(2) is released and the remaining methylamine moiety is then transferred to the lipoamide cofactor of the H protein. The chain is Probable glycine dehydrogenase (decarboxylating) subunit 1 from Macrococcus caseolyticus (strain JCSC5402) (Macrococcoides caseolyticum).